Consider the following 720-residue polypeptide: MITANSFERTIGGRKLTIESGKMARLADAAVTIRYADTELLVTLCAAKKPREGVDFLPLTIDYEERMYAAGKIPGGFIRREGRPSEQAILAGRLTDRPLRPLLPKEWRNELQIIITVIASDKENDADIWGVVGASTVLTMSQIPYEGPVGASRVGYTNGEFVLNPTFAQLEQSQMDLVVVSTRKAVVMIEAGSKEIPEDLMIKAIEFAHQANQELIDLQDEIRAKLGKEKLPVPVLEIPEEVKAAVAAFVKGRVNEALSHQDKTLRENAVEALQSELVEALAETYAEGDILAAYDKEIKKAIRSTILEKDIRVNGRGIKQLRQLDAETGILPRVHGSALFTRGDTQVMAITTLGSLQEAQQLDGLSAEDTKRFMLHYNFAPFSTGEVKRSGSPGRREIGHGALAERALVPVLPTPEEFPYTIRMVADVVGSSGSTSMGSVCSSSLSLMDAGVPVKKAVAGISIGLITGENDTYCTITDIEGIEDNYGDMDFKVAGTRDGITAIQVDMKVKGISFDVIRDAIYQAKEARYTILEVMDKALAQPKTELSPYAPRMYKISIDPSKIGSVIGSGGKTIRSIIEQTNTTVDIENDGTVVIGATDEASAQKAIKIIEDLTKDVEAGSVYTGKVTRIMTFGAFVEILPGKEGMVHISELADHRVEKVEDVVKVGDEITVKVTEIDSQGRINLSRRVILNPNAVPISRNRDSQPRRSGPFRPQDRSNS.

The Mg(2+) site is built by aspartate 484 and aspartate 490. In terms of domain architecture, KH spans 551–610 (PRMYKISIDPSKIGSVIGSGGKTIRSIIEQTNTTVDIENDGTVVIGATDEASAQKAIKII). The S1 motif domain occupies 620–688 (GSVYTGKVTR…SQGRINLSRR (69 aa)). Residues 697-720 (PISRNRDSQPRRSGPFRPQDRSNS) are disordered.

The protein belongs to the polyribonucleotide nucleotidyltransferase family. Mg(2+) is required as a cofactor.

It is found in the cytoplasm. It catalyses the reaction RNA(n+1) + phosphate = RNA(n) + a ribonucleoside 5'-diphosphate. Its function is as follows. Involved in mRNA degradation. Catalyzes the phosphorolysis of single-stranded polyribonucleotides processively in the 3'- to 5'-direction. The protein is Polyribonucleotide nucleotidyltransferase of Dehalococcoides mccartyi (strain ATCC BAA-2266 / KCTC 15142 / 195) (Dehalococcoides ethenogenes (strain 195)).